A 932-amino-acid chain; its full sequence is AP-3 complex subunit delta (932 aa).

The residue at position 2 (threonine 2) is an N-acetylthreonine. 12 HEAT repeats span residues 157-194, 196-231, 233-269, 270-307, 310-346, 347-384, 386-425, 427-466, 490-527, 528-564, 570-601, and 602-638; these read SLAR…QYPE, LRDN…KNPQ, FIQL…VEPK, LRAK…LEED, ETAM…KINT, DFIS…EDNL, AIVQ…ENYK, KMVN…DISD, VTIA…TLVE, NGND…NWCN, KRFE…ERSV, and EVLE…AYEL. Residues serine 700 and serine 727 each carry the phosphoserine modification. Positions 720-868 are disordered; sequence EREKERMSNP…EEGNLRKEDE (149 aa). Basic and acidic residues-rich tracts occupy residues 738–747 and 755–766; these read ERTKNSKDLL and SDKKPETIRLNR. Threonine 767 bears the Phosphothreonine mark. Low complexity predominate over residues 767–779; sequence TDNSLNSLSLSTT. Phosphoserine occurs at positions 770 and 773. Residues 783-793 are compositionally biased toward basic residues; it reads RKKKKGKKKNR. Phosphoserine is present on serine 798. Positions 806–832 are enriched in basic and acidic residues; sequence APKRKDAFQKPHDNHSTQNPLKKDKIN. The span at 838 to 855 shows a compositional bias: polar residues; sequence QLENFDFSNFGQSSNAGR. A compositionally biased stretch (basic and acidic residues) spans 857–868; that stretch reads SQEEGNLRKEDE. Positions 858–878 form a coiled coil; that stretch reads QEEGNLRKEDELELSRLEANL. The residue at position 888 (serine 888) is a Phosphoserine. Over residues 897–915 the composition is skewed to basic residues; sequence KKKKKGKKSKSKNKLKTKA. The tract at residues 897 to 932 is disordered; the sequence is KKKKKGKKSKSKNKLKTKAKNSPEPNEFLRDQSTDI. Serine 918 is subject to Phosphoserine. A compositionally biased stretch (basic and acidic residues) spans 923 to 932; the sequence is EFLRDQSTDI.

This sequence belongs to the adaptor complexes large subunit family. Adaptor protein complex 3 (AP-3) is a heterotetramer composed of 2 large adaptins (APL5 and APL6), a medium adaptin (APM3) and a small adaptin (APS3). Interacts with VPS41.

Its subcellular location is the golgi apparatus. The protein localises to the cytoplasmic vesicle. The protein resides in the clathrin-coated vesicle membrane. In terms of biological role, part of the AP-3 complex, an adaptor-related complex which is not clathrin-associated. The complex is associated with the Golgi region as well as more peripheral structures. It facilitates the budding of vesicles from the Golgi membrane and may be directly involved in trafficking to the vacuole. Required for the transport via the ALP pathway, which directs the transport of the cargo proteins PHO8 and VAM3 to the vacuole. The chain is AP-3 complex subunit delta (APL5) from Saccharomyces cerevisiae (strain ATCC 204508 / S288c) (Baker's yeast).